The primary structure comprises 541 residues: 2-hydroxyacylsphingosine 1-beta-galactosyltransferase (541 aa).

Residues 1-20 (MKSYTPYFMLLWSAVGIARA) form the signal peptide. 3 N-linked (GlcNAc...) asparagine glycosylation sites follow: Asn78, Asn333, and Asn442. A helical membrane pass occupies residues 472–492 (YFLLDIAFVLLLGAVLLYFIL). The disordered stretch occupies residues 518–541 (HYQNGIRNGKYKGNGRVKHEKKVR). The segment covering 526–541 (GKYKGNGRVKHEKKVR) has biased composition (basic residues).

It belongs to the UDP-glycosyltransferase family.

The protein resides in the membrane. The protein localises to the endoplasmic reticulum. It carries out the reaction an N-acylsphing-4-enine + UDP-alpha-D-galactose = a beta-D-galactosyl-(1&lt;-&gt;1')-N-acylsphing-4-enine + UDP + H(+). The enzyme catalyses N-(2-hydroxy-hexanoyl)-sphing-4-enine + UDP-alpha-D-galactose = N-(2-hydroxy-hexanoyl)-beta-D-galactosyl-sphing-4-enine + UDP + H(+). The catalysed reaction is N-(2-hydroxy-hexanoyl)-sphinganine + UDP-alpha-D-galactose = N-(2-hydroxyhexanoyl)-beta-D-galactosylsphinganine + UDP + H(+). It catalyses the reaction an N-acyl-sphingoid base + UDP-alpha-D-galactose = a D-galactosylceramide + UDP + H(+). It participates in sphingolipid metabolism; galactosylceramide biosynthesis. Functionally, catalyzes the transfer of galactose to ceramide, a key enzymatic step in the biosynthesis of galactocerebrosides, which are abundant sphingolipids of the myelin membrane of the central nervous system and peripheral nervous system. Galactosylates both hydroxy- and non-hydroxy fatty acid-containing ceramides and diglycerides. This is 2-hydroxyacylsphingosine 1-beta-galactosyltransferase from Mus musculus (Mouse).